The sequence spans 199 residues: Shikimate kinase (199 aa).

12-17 (GAGKST) provides a ligand contact to ATP. A Mg(2+)-binding site is contributed by Ser-16. Residues Asp-34, Arg-58, and Gly-80 each coordinate substrate. Residue Arg-117 participates in ATP binding. Arg-136 serves as a coordination point for substrate. The interval 174-199 (VSGGDRKSSEAERSGAPLRKSSEVVK) is disordered. Residues 177-186 (GDRKSSEAER) show a composition bias toward basic and acidic residues.

Belongs to the shikimate kinase family. In terms of assembly, monomer. The cofactor is Mg(2+).

The protein resides in the cytoplasm. The catalysed reaction is shikimate + ATP = 3-phosphoshikimate + ADP + H(+). The protein operates within metabolic intermediate biosynthesis; chorismate biosynthesis; chorismate from D-erythrose 4-phosphate and phosphoenolpyruvate: step 5/7. Catalyzes the specific phosphorylation of the 3-hydroxyl group of shikimic acid using ATP as a cosubstrate. The chain is Shikimate kinase from Mycobacterium leprae (strain TN).